The sequence spans 208 residues: Mediator of RNA polymerase II transcription subunit 18 (208 aa).

The protein belongs to the Mediator complex subunit 18 family. As to quaternary structure, component of the Mediator complex.

The protein localises to the nucleus. Its function is as follows. Component of the Mediator complex, a coactivator involved in the regulated transcription of nearly all RNA polymerase II-dependent genes. Mediator functions as a bridge to convey information from gene-specific regulatory proteins to the basal RNA polymerase II transcription machinery. Mediator is recruited to promoters by direct interactions with regulatory proteins and serves as a scaffold for the assembly of a functional preinitiation complex with RNA polymerase II and the general transcription factors. The protein is Mediator of RNA polymerase II transcription subunit 18 (med18) of Xenopus tropicalis (Western clawed frog).